Reading from the N-terminus, the 467-residue chain is Methylenetetrahydrofolate--tRNA-(uracil-5-)-methyltransferase TrmFO (467 aa).

10-15 (GAGLAG) contributes to the FAD binding site.

This sequence belongs to the MnmG family. TrmFO subfamily. FAD serves as cofactor.

The protein resides in the cytoplasm. It catalyses the reaction uridine(54) in tRNA + (6R)-5,10-methylene-5,6,7,8-tetrahydrofolate + NADH + H(+) = 5-methyluridine(54) in tRNA + (6S)-5,6,7,8-tetrahydrofolate + NAD(+). The enzyme catalyses uridine(54) in tRNA + (6R)-5,10-methylene-5,6,7,8-tetrahydrofolate + NADPH + H(+) = 5-methyluridine(54) in tRNA + (6S)-5,6,7,8-tetrahydrofolate + NADP(+). In terms of biological role, catalyzes the folate-dependent formation of 5-methyl-uridine at position 54 (M-5-U54) in all tRNAs. The sequence is that of Methylenetetrahydrofolate--tRNA-(uracil-5-)-methyltransferase TrmFO from Prochlorococcus marinus (strain MIT 9515).